The chain runs to 596 residues: Delta(24(24(1)))-sterol reductase (596 aa).

The interval 1 to 122 (MSSRYSLRQT…GHATNGHATS (122 aa)) is disordered. Gly residues predominate over residues 98–112 (NGNGNGYTNGHGNGN). 8 consecutive transmembrane segments (helical) span residues 168-188 (FGTA…WIGA), 225-245 (VWAW…LLPG), 269-289 (WSLY…IWPL), 296-316 (FGPL…VAYF), 353-373 (MFFE…GTAA), 381-401 (YVSG…NACA), 419-439 (GFML…HCTI), and 454-474 (GILA…DSCN). NADP(+)-binding positions include Lys477, Arg481, Leu516, and 528–529 (HY). Residues 535–557 (FAVSWGLITGFESPFPWFYPVFF) form a helical membrane-spanning segment. NADP(+) is bound by residues Asp568, 572 to 576 (CRRKY), and Tyr583.

The protein belongs to the ERG4/ERG24 family.

The protein localises to the endoplasmic reticulum membrane. It carries out the reaction ergosterol + NADP(+) = ergosta-5,7,22,24(28)-tetraen-3beta-ol + NADPH + H(+). It participates in steroid metabolism; ergosterol biosynthesis. Its function is as follows. Delta(24(24(1)))-sterol reductase; part of the third module of ergosterol biosynthesis pathway that includes the late steps of the pathway. ERG4 catalyzes the last step of ergosterol biosynthesis by converting ergosta-5,7,22,24(28)-tetraen-3beta-ol into ergosterol. The third module or late pathway involves the ergosterol synthesis itself through consecutive reactions that mainly occur in the endoplasmic reticulum (ER) membrane. Firstly, the squalene synthase ERG9 catalyzes the condensation of 2 farnesyl pyrophosphate moieties to form squalene, which is the precursor of all steroids. Squalene synthase is crucial for balancing the incorporation of farnesyl diphosphate (FPP) into sterol and nonsterol isoprene synthesis. Secondly, squalene is converted into lanosterol by the consecutive action of the squalene epoxidase ERG1 and the lanosterol synthase ERG7. Then, the delta(24)-sterol C-methyltransferase ERG6 methylates lanosterol at C-24 to produce eburicol. Eburicol is the substrate of the sterol 14-alpha demethylase encoded by CYP51A, CYP51B and CYP51C, to yield 4,4,24-trimethyl ergosta-8,14,24(28)-trienol. CYP51B encodes the enzyme primarily responsible for sterol 14-alpha-demethylation, and plays an essential role in ascospore formation. CYP51A encodes an additional sterol 14-alpha-demethylase, induced on ergosterol depletion and responsible for the intrinsic variation in azole sensitivity. The third CYP51 isoform, CYP51C, does not encode a sterol 14-alpha-demethylase, but is required for full virulence on host wheat ears. The C-14 reductase ERG24 then reduces the C14=C15 double bond which leads to 4,4-dimethylfecosterol. A sequence of further demethylations at C-4, involving the C-4 demethylation complex containing the C-4 methylsterol oxidases ERG25, the sterol-4-alpha-carboxylate 3-dehydrogenase ERG26 and the 3-keto-steroid reductase ERG27, leads to the production of fecosterol via 4-methylfecosterol. ERG28 has a role as a scaffold to help anchor ERG25, ERG26 and ERG27 to the endoplasmic reticulum. The C-8 sterol isomerase ERG2 then catalyzes the reaction which results in unsaturation at C-7 in the B ring of sterols and thus converts fecosterol to episterol. The sterol-C5-desaturases ERG3A and ERG3BB then catalyze the introduction of a C-5 double bond in the B ring to produce 5-dehydroepisterol. The C-22 sterol desaturases ERG5A and ERG5B further convert 5-dehydroepisterol into ergosta-5,7,22,24(28)-tetraen-3beta-ol by forming the C-22(23) double bond in the sterol side chain. Finally, ergosta-5,7,22,24(28)-tetraen-3beta-ol is substrate of the C-24(28) sterol reductase ERG4 to produce ergosterol. In Gibberella zeae (strain ATCC MYA-4620 / CBS 123657 / FGSC 9075 / NRRL 31084 / PH-1) (Wheat head blight fungus), this protein is Delta(24(24(1)))-sterol reductase.